A 500-amino-acid polypeptide reads, in one-letter code: Probable malate:quinone oxidoreductase (500 aa).

It belongs to the MQO family. It depends on FAD as a cofactor.

The enzyme catalyses (S)-malate + a quinone = a quinol + oxaloacetate. It participates in carbohydrate metabolism; tricarboxylic acid cycle; oxaloacetate from (S)-malate (quinone route): step 1/1. This is Probable malate:quinone oxidoreductase from Bacillus cereus (strain G9842).